A 381-amino-acid chain; its full sequence is tRNA-specific 2-thiouridylase MnmA (381 aa).

ATP is bound by residues 9–16 (GMSGGVDS) and Met35. Residues 95-97 (NPD) form an interaction with target base in tRNA region. The active-site Nucleophile is Cys100. An intrachain disulfide couples Cys100 to Cys196. Gly124 is an ATP binding site. The tract at residues 146–148 (KDQ) is interaction with tRNA. Cys196 acts as the Cysteine persulfide intermediate in catalysis. Residues 308–309 (RY) form an interaction with tRNA region.

Belongs to the MnmA/TRMU family.

The protein resides in the cytoplasm. The enzyme catalyses S-sulfanyl-L-cysteinyl-[protein] + uridine(34) in tRNA + AH2 + ATP = 2-thiouridine(34) in tRNA + L-cysteinyl-[protein] + A + AMP + diphosphate + H(+). Catalyzes the 2-thiolation of uridine at the wobble position (U34) of tRNA, leading to the formation of s(2)U34. In Paraburkholderia xenovorans (strain LB400), this protein is tRNA-specific 2-thiouridylase MnmA.